Here is a 796-residue protein sequence, read N- to C-terminus: Protein translocase subunit SecA 2 (796 aa).

Residues glutamine 84, glycine 102–threonine 106, and aspartate 496 each bind ATP.

Belongs to the SecA family. As to quaternary structure, monomer and homodimer. Part of the essential Sec protein translocation apparatus which comprises SecA, SecYEG and auxiliary proteins SecDF. Other proteins may also be involved.

The protein resides in the cell membrane. The protein localises to the cytoplasm. It catalyses the reaction ATP + H2O + cellular proteinSide 1 = ADP + phosphate + cellular proteinSide 2.. Functionally, part of the Sec protein translocase complex. Interacts with the SecYEG preprotein conducting channel. Has a central role in coupling the hydrolysis of ATP to the transfer of proteins into and across the cell membrane, serving as an ATP-driven molecular motor driving the stepwise translocation of polypeptide chains across the membrane. The chain is Protein translocase subunit SecA 2 from Staphylococcus aureus (strain Mu3 / ATCC 700698).